Consider the following 252-residue polypeptide: Neurovirulence factor ICP34.5 (252 aa).

The segment covering 1 to 15 has biased composition (basic residues); sequence MARRRRRHRGPRRPR. Residues 1–17 are required for nucleolar localization; the sequence is MARRRRRHRGPRRPRPP. 2 disordered regions span residues 1–129 and 150–179; these read MARR…PFRL and RRAG…PATP. Residues 25–36 are compositionally biased toward polar residues; that stretch reads TAQSQVTSTPNS. Positions 46–59 are enriched in pro residues; that stretch reads AAPPPPPAGGPPPS. Residues 74-84 show a composition bias toward acidic residues; sequence ASDDDDDDDWP. Pro residues-rich tracts occupy residues 85–94 and 120–129; these read DSPPPEPAPE and SHPPSRPFRL. Residues 129 to 138 carry the Nuclear export signal motif; sequence LPPRLALRLR. Repeat copies occupy residues 162–164, 165–167, 168–170, 171–173, 174–176, and 177–179. The segment at 162 to 179 is 6 X 3 AA tandem repeats of A-T-P; sequence ATPATPATPATPATPATP. Residues 165-179 show a composition bias toward low complexity; it reads ATPATPATPATPATP. Positions 179-192 are binding to PP1CA; the sequence is PARVRFSPHVRVRH. The interval 179–192 is interaction with host PPP1CA; sequence PARVRFSPHVRVRH. The tract at residues 194–252 is important for interferon resistance; sequence VVWASAARLARRGSWARERADRARFRRRVAEAEAVIGPCLGPKARARALARGAGPANSV. A Bipartite nuclear localization signal motif is present at residues 204–222; sequence RRGSWARERADRARFRRRV. Positions 222-237 are interaction with host EIF2S1/EIF-2ALPHA; it reads VAEAEAVIGPCLGPKA.

This sequence belongs to the PPP1R15 family. In terms of assembly, interacts with host PPP1CA to form a high-molecular-weight complex that dephosphorylates EIF2S1/eIF-2alpha. Interacts with host EIF2S1/eIF-2alpha; this interaction is crucial for the specific dephosphorylation of EIF2S1/eIF-2alpha by PPP1CA. Binds to proliferating cell nuclear antigen (PCNA), which may release host cells from growth arrest and facilitate viral replication. Interacts (via N-terminus) with host C1QBP and PRKCA. Interacts with protein UL31. Interacts with host TBK1. Interacts with host STING/TMEM173; this interaction inhibits the intracellular DNA sensing pathway. Interacts with host BECN1; this interaction modulates host autophagy.

Its subcellular location is the host cytoplasm. The protein localises to the host nucleus. It localises to the host nucleolus. The protein resides in the virion. Its function is as follows. Inhibits the establishment of the immune response and of the integrated stress response (ISR) in the infected cell. Plays essential roles in viral nuclear egress to mediate capsid transit across the nuclear membrane. Facilitates nuclear egress cooperatively with host C1QBP and protein kinase C/PKC to induce lamin A/C phosphorylation and subsequent reorganization. In turn, lamina disassembles and nuclear egress occurs. Recruits the serine/threonine protein phosphatase PPP1CA/PP1-alpha to dephosphorylate the translation initiation factor EIF2S1/eIF-2alpha, thereby couteracting the host shutoff of protein synthesis involving double-stranded RNA-dependent protein kinase EIF2AK2/PKR. In turn, controls host IRF3 activation and subsequently inhibits host interferon response. Controls the DNA sensing pathway by interacting with and inhibiting host STING/TMEM173. Also down-modulates the host MHC class II proteins cell surface expression. Acts as a neurovirulence factor that has a profound effect on the growth of the virus in central nervous system tissue, by interacting with host BECN1 and thereby antagonizing the host autophagy response. The sequence is that of Neurovirulence factor ICP34.5 (RL1) from Human herpesvirus 1 (strain CVG-2) (HHV-1).